The sequence spans 342 residues: Pre-mRNA-splicing factor 18 (342 aa).

N-acetylmethionine is present on Met1.

It belongs to the PRP18 family. Heterodimer with PPIH. Interacts with PRPF4 and with the spliceosome. Part of a complex containing U4/U6 snRNPs. Also detected in the cytoplasm. Detected in brain, heart, liver and skeletal muscle.

The protein resides in the nucleus speckle. Functionally, participates in the second step of pre-mRNA splicing. Down-regulates the expression of potassium channel subunits. The chain is Pre-mRNA-splicing factor 18 (Prpf18) from Rattus norvegicus (Rat).